A 56-amino-acid polypeptide reads, in one-letter code: Sec-independent protein translocase protein TatA (56 aa).

The chain crosses the membrane as a helical span at residues 1-21 (MALGPWQIFLILVIILVLFGA).

This sequence belongs to the TatA/E family. In terms of assembly, the Tat system comprises two distinct complexes: a TatABC complex, containing multiple copies of TatA, TatB and TatC subunits, and a separate TatA complex, containing only TatA subunits. Substrates initially bind to the TatABC complex, which probably triggers association of the separate TatA complex to form the active translocon.

The protein resides in the cell inner membrane. Functionally, part of the twin-arginine translocation (Tat) system that transports large folded proteins containing a characteristic twin-arginine motif in their signal peptide across membranes. TatA could form the protein-conducting channel of the Tat system. This is Sec-independent protein translocase protein TatA from Ehrlichia ruminantium (strain Welgevonden).